A 235-amino-acid polypeptide reads, in one-letter code: Thiamine import ATP-binding protein ThiQ (235 aa).

One can recognise an ABC transporter domain in the interval 2–230 (LKLIDITWLY…QASASALLGI (229 aa)). ATP is bound at residue 32–39 (GPSGAGKS).

Belongs to the ABC transporter superfamily. Thiamine importer (TC 3.A.1.19.1) family. As to quaternary structure, the complex is composed of two ATP-binding proteins (ThiQ), two transmembrane proteins (ThiP) and a solute-binding protein (ThiB).

The protein localises to the cell inner membrane. The enzyme catalyses thiamine(out) + ATP + H2O = thiamine(in) + ADP + phosphate + H(+). Part of the ABC transporter complex ThiBPQ involved in thiamine import. Responsible for energy coupling to the transport system. This is Thiamine import ATP-binding protein ThiQ from Salmonella choleraesuis (strain SC-B67).